Consider the following 332-residue polypeptide: Fructose-1,6-bisphosphatase class 1 (332 aa).

The Mg(2+) site is built by Glu89, Asp110, Leu112, and Asp113. Substrate is bound by residues 113-116 (DGSS), Asn206, Tyr239, 257-259 (YLY), and Lys269. Position 275 (Glu275) interacts with Mg(2+).

Belongs to the FBPase class 1 family. In terms of assembly, homotetramer. The cofactor is Mg(2+).

The protein resides in the cytoplasm. The enzyme catalyses beta-D-fructose 1,6-bisphosphate + H2O = beta-D-fructose 6-phosphate + phosphate. The protein operates within carbohydrate biosynthesis; gluconeogenesis. The chain is Fructose-1,6-bisphosphatase class 1 from Cronobacter sakazakii (strain ATCC BAA-894) (Enterobacter sakazakii).